The chain runs to 132 residues: Nickel-responsive regulator (132 aa).

Positions 76, 87, 89, and 95 each coordinate Ni(2+).

It belongs to the transcriptional regulatory CopG/NikR family. As to quaternary structure, homotetramer. Ni(2+) is required as a cofactor.

Transcriptional repressor of the nikABCDE operon. Is active in the presence of excessive concentrations of intracellular nickel. This is Nickel-responsive regulator from Klebsiella pneumoniae subsp. pneumoniae (strain ATCC 700721 / MGH 78578).